The primary structure comprises 1399 residues: DNA-directed RNA polymerase subunit beta' (1399 aa).

Zn(2+) contacts are provided by cysteine 71, cysteine 73, cysteine 86, and cysteine 89. Mg(2+) is bound by residues aspartate 462, aspartate 464, and aspartate 466. Positions 810, 884, 891, and 894 each coordinate Zn(2+). The interval 1379-1399 is disordered; that stretch reads KQAAIVPSQPEPQPLALPPAE. Over residues 1387–1399 the composition is skewed to pro residues; sequence QPEPQPLALPPAE.

Belongs to the RNA polymerase beta' chain family. The RNAP catalytic core consists of 2 alpha, 1 beta, 1 beta' and 1 omega subunit. When a sigma factor is associated with the core the holoenzyme is formed, which can initiate transcription. Mg(2+) serves as cofactor. It depends on Zn(2+) as a cofactor.

It catalyses the reaction RNA(n) + a ribonucleoside 5'-triphosphate = RNA(n+1) + diphosphate. Functionally, DNA-dependent RNA polymerase catalyzes the transcription of DNA into RNA using the four ribonucleoside triphosphates as substrates. This chain is DNA-directed RNA polymerase subunit beta', found in Bradyrhizobium sp. (strain ORS 278).